Consider the following 343-residue polypeptide: Phosphate acyltransferase (343 aa).

This sequence belongs to the PlsX family. In terms of assembly, homodimer. Probably interacts with PlsY.

It localises to the cytoplasm. The catalysed reaction is a fatty acyl-[ACP] + phosphate = an acyl phosphate + holo-[ACP]. It participates in lipid metabolism; phospholipid metabolism. Functionally, catalyzes the reversible formation of acyl-phosphate (acyl-PO(4)) from acyl-[acyl-carrier-protein] (acyl-ACP). This enzyme utilizes acyl-ACP as fatty acyl donor, but not acyl-CoA. The sequence is that of Phosphate acyltransferase from Coxiella burnetii (strain CbuG_Q212) (Coxiella burnetii (strain Q212)).